The primary structure comprises 134 residues: Small ribosomal subunit protein uS8 (134 aa).

It belongs to the universal ribosomal protein uS8 family. In terms of assembly, part of the 30S ribosomal subunit. Contacts proteins S5 and S12.

One of the primary rRNA binding proteins, it binds directly to 16S rRNA central domain where it helps coordinate assembly of the platform of the 30S subunit. This chain is Small ribosomal subunit protein uS8, found in Kosmotoga olearia (strain ATCC BAA-1733 / DSM 21960 / TBF 19.5.1).